A 518-amino-acid polypeptide reads, in one-letter code: Chaperonin GroEL (518 aa).

Residues 30-33 (TLGP), lysine 51, 87-91 (DGTTT), and glycine 415 contribute to the ATP site.

This sequence belongs to the chaperonin (HSP60) family. Forms a cylinder of 14 subunits composed of two heptameric rings stacked back-to-back. Interacts with the co-chaperonin GroES.

The protein resides in the cytoplasm. It carries out the reaction ATP + H2O + a folded polypeptide = ADP + phosphate + an unfolded polypeptide.. Together with its co-chaperonin GroES, plays an essential role in assisting protein folding. The GroEL-GroES system forms a nano-cage that allows encapsulation of the non-native substrate proteins and provides a physical environment optimized to promote and accelerate protein folding. This chain is Chaperonin GroEL, found in Desulfotalea psychrophila (strain LSv54 / DSM 12343).